We begin with the raw amino-acid sequence, 384 residues long: Viral protein 1 (384 aa).

This is Viral protein 1 from Chaetoceros setoense (Chaetoceros setoense DNA virus).